The sequence spans 219 residues: Transmembrane emp24 domain-containing protein 10 (219 aa).

A signal peptide spans Met1–Gly31. Positions Met1–Glu142 are required for interaction with STX17. Residues Ile32 to Arg185 are Lumenal-facing. The region spanning Arg41 to Ser193 is the GOLD domain. A required for TMED10 and TMED2 cis-Golgi network localization region spans residues Leu147–Thr178. A dimethylated arginine mark is found at Arg171 and Arg176. A glycan (N-linked (GlcNAc...) asparagine) is linked at Asn179. A helical transmembrane segment spans residues Val186–Phe206. Residues Gln204 to Glu219 form an interaction with COPG1 region. Topologically, residues Tyr207–Glu219 are cytoplasmic. An interaction with ARF1 and IL1B region spans residues Tyr207–Glu219. The COPII vesicle coat-binding signature appears at Phe211–Phe212. A COPI vesicle coat-binding motif is present at residues Phe211–Glu219.

This sequence belongs to the EMP24/GP25L family. In terms of assembly, predominantly dimeric and to a lesser extent monomeric in the ER. Monomer and dimer in ERGIC and cis-Golgi network. Forms homooligomer (via GOLD domain); the assembly is promoted by direct binding with leaderless cargos and may form a protein channel that facilitates cargo entry into the ERGIC. Forms heterooligomeric complexes with other members of the p24 family such as TMED2, TMED7 and TMED9. Interacts (via GOLD domain) with TMED2 (via GOLD domain); the complex is required for export of TMED10 from the ER to the cis-Golgi network; the complex is proposed to be involved in cis-Golgi network dynamics and / or biogenesis. Associates with the COPI vesicle coat subunits (coatomer). Tetramerization of the cytoplasmic domain at the Golgi membrane in vitro; the complex is proposed to interact with COPI coatomer and induce budding of the vesicles. Interacts with COPG1; the interaction involves TMED10 homodimer. Interacts with ARF1 (GDP-bound); the interaction probably involves a TMED10 oligomer. Interacts with SEC23A, SEC24B, SEC24C and SEC24D components of the coat protein complex II/COPII, indicative of an association of TMED10 with the COPII vesicle coat. Interacts with CD59. Interacts with MPPE1/PGAP5; the complex might recruit and sort GPI-anchored proteins to the ER-exit site, or the interaction might lead to recycling of PGAP5 between the ER and the Golgi. Interacts with F2LR1/PAR2. Interacts with KDELR2/ERD2; the interaction is disrupted by KDELR2 ligand. Found in a complex composed at least of SURF4, TMED2 and TMED10. Associates with the presenilin-dependent gamma-secretase complex. Interacts with STX17; the interaction is direct. Interacts with IL-1; the interaction is direct. Interacts with RAB21 (active GTP-bound form); the interaction is indirect and regulates TMED10 abundance and localization at the Golgi.

The protein localises to the endoplasmic reticulum membrane. Its subcellular location is the endoplasmic reticulum-Golgi intermediate compartment membrane. The protein resides in the golgi apparatus membrane. It is found in the golgi apparatus. It localises to the cis-Golgi network membrane. The protein localises to the trans-Golgi network membrane. Its subcellular location is the cytoplasmic vesicle. The protein resides in the secretory vesicle membrane. It is found in the cell membrane. It localises to the melanosome. Functionally, cargo receptor involved in protein vesicular trafficking and quality control in the endoplasmic reticulum (ER) and Golgi. The p24 protein family is a group of transmembrane proteins that bind coat protein complex I/COPI and coat protein complex II/COPII involved in vesicular trafficking between the membranes. Acts at the lumenal side for incorporation of secretory cargo molecules into transport vesicles and involved in vesicle coat formation at the cytoplasmic side. Mainly functions in the early secretory pathway and cycles between the ER, ER-Golgi intermediate compartment (ERGIC) and Golgi, mediating cargo transport through COPI and COPII-coated vesicles. In COPII vesicle-mediated anterograde transport, involved in the transport of GPI-anchored proteins by acting together with TMED2 as their cargo receptor; the function specifically implies SEC24C and SEC24D of the COPII vesicle coat and lipid raft-like microdomains of the ER. Recognizes GPI anchors structural remodeled in the ER by the GPI inositol-deacylase/PGAP1 and the metallophosphoesterase MPPE1/PGAP5. In COPI vesicle-mediated retrograde transport, involved in the biogenesis of COPI vesicles and vesicle coat recruitment. Involved in trafficking of amyloid beta A4 protein and soluble APP-beta release (independent from the modulation of gamma-secretase activity). Involved in the KDELR2-mediated retrograde transport of the toxin A subunit (CTX-A-K63)together with COPI and the COOH terminus of KDELR2. On Golgi membranes, acts as a primary receptor for ARF1-GDP, a GTP-binding protein involved in COPI-vesicle formation. Increases coatomer-dependent GTPase-activating activity of ARFGAP2 which mediates the hydrolysis of ARF1-bound GTP and therefore modulates protein trafficking from the Golgi apparatus. Involved in the exocytic trafficking of G protein-coupled receptors F2LR1/PAR2 (trypsin and tryspin-like enzyme receptor), OPRM1 (opioid receptor) and P2RY4 (UTD and UDP receptor) from the Golgi to the plasma membrane, thus contributing to receptor resensitization. In addition to its cargo receptor activity, may also act as a protein channel after oligomerization, facilitating the post-translational entry of leaderless cytoplasmic cargo into the ERGIC. Involved in the translocation into ERGIC, the vesicle entry and the secretion of leaderless cargos (lacking the secretion signal sequence), including the mature form of interleukin 1/IL-1 family members, the alpha-crystallin B chain HSPB5, the carbohydrate-binding proteins galectin-1/LGALS1 and galectin-3/LGALS3, the microtubule-associated protein Tau/MAPT, and the annexin A1/ANXA1; the translocation process is dependent on cargo protein unfolding and enhanced by chaperones HSP90AB1 and HSP90B1/GRP9. Could also associates with the presenilin-dependent gamma-secretase complex in order to regulate gamma-cleavages of the amyloid beta A4 protein to yield amyloid-beta 40/Abeta40. The protein is Transmembrane emp24 domain-containing protein 10 of Mus musculus (Mouse).